We begin with the raw amino-acid sequence, 651 residues long: DNA topoisomerase 3 (651 aa).

Positions 1–134 (MRLFIAEKPS…KRDKILRCLI (134 aa)) constitute a Toprim domain. Mg(2+)-binding residues include E7, D103, and D105. The 458-residue stretch at 155-612 (FIPLATSALA…NLNQILPDLV (458 aa)) folds into the Topo IA-type catalytic domain. The tract at residues 194–199 (SVGRVQ) is interaction with DNA. Catalysis depends on Y337, which acts as the O-(5'-phospho-DNA)-tyrosine intermediate. A disordered region spans residues 631–651 (SDRAKPKSAVKKSSKSNGETD).

It belongs to the type IA topoisomerase family. Mg(2+) serves as cofactor.

The enzyme catalyses ATP-independent breakage of single-stranded DNA, followed by passage and rejoining.. Releases the supercoiling and torsional tension of DNA, which is introduced during the DNA replication and transcription, by transiently cleaving and rejoining one strand of the DNA duplex. Introduces a single-strand break via transesterification at a target site in duplex DNA. The scissile phosphodiester is attacked by the catalytic tyrosine of the enzyme, resulting in the formation of a DNA-(5'-phosphotyrosyl)-enzyme intermediate and the expulsion of a 3'-OH DNA strand. The free DNA strand then undergoes passage around the unbroken strand, thus removing DNA supercoils. Finally, in the religation step, the DNA 3'-OH attacks the covalent intermediate to expel the active-site tyrosine and restore the DNA phosphodiester backbone. This Haemophilus influenzae (strain ATCC 51907 / DSM 11121 / KW20 / Rd) protein is DNA topoisomerase 3.